The chain runs to 192 residues: Phosphoheptose isomerase (192 aa).

Positions 34-192 (LADALGNGKK…LEKRLFGERR (159 aa)) constitute an SIS domain. 49–51 (NGG) provides a ligand contact to substrate. Residues histidine 58 and glutamate 62 each coordinate Zn(2+). Substrate-binding positions include glutamate 62, 91–92 (ND), 117–119 (STS), serine 122, and glutamine 169. Zn(2+) is bound by residues glutamine 169 and histidine 177.

Belongs to the SIS family. GmhA subfamily. In terms of assembly, homotetramer. Zn(2+) serves as cofactor.

It localises to the cytoplasm. It carries out the reaction 2 D-sedoheptulose 7-phosphate = D-glycero-alpha-D-manno-heptose 7-phosphate + D-glycero-beta-D-manno-heptose 7-phosphate. It functions in the pathway carbohydrate biosynthesis; D-glycero-D-manno-heptose 7-phosphate biosynthesis; D-glycero-alpha-D-manno-heptose 7-phosphate and D-glycero-beta-D-manno-heptose 7-phosphate from sedoheptulose 7-phosphate: step 1/1. Functionally, catalyzes the isomerization of sedoheptulose 7-phosphate in D-glycero-D-manno-heptose 7-phosphate. This chain is Phosphoheptose isomerase, found in Geotalea daltonii (strain DSM 22248 / JCM 15807 / FRC-32) (Geobacter daltonii).